The primary structure comprises 389 residues: uncharacterized protein (389 aa).

4 disordered regions span residues 119–156 (SSLF…GENQ), 180–233 (PTSK…SSMG), 294–321 (SIPS…TSRT), and 362–389 (PEDM…EIKV). Residues 137–155 (SPSTINIEKNRHSSNSGEN) are compositionally biased toward polar residues. Acidic residues predominate over residues 190–204 (DDGDEEDDTDDEGEA).

This is an uncharacterized protein from Caenorhabditis elegans.